A 508-amino-acid chain; its full sequence is Photosystem II CP47 reaction center protein (508 aa).

6 helical membrane-spanning segments follow: residues 21–36 (AVHI…WAGS), 101–115 (IVFS…IWHW), 140–156 (GIHL…FGAF), 203–218 (IAAG…FHLS), 237–252 (VLSS…AFVV), and 457–472 (SFAL…HGAR).

Belongs to the PsbB/PsbC family. PsbB subfamily. PSII is composed of 1 copy each of membrane proteins PsbA, PsbB, PsbC, PsbD, PsbE, PsbF, PsbH, PsbI, PsbJ, PsbK, PsbL, PsbM, PsbT, PsbX, PsbY, PsbZ, Psb30/Ycf12, at least 3 peripheral proteins of the oxygen-evolving complex and a large number of cofactors. It forms dimeric complexes. Binds multiple chlorophylls. PSII binds additional chlorophylls, carotenoids and specific lipids. is required as a cofactor.

The protein localises to the plastid. Its subcellular location is the chloroplast thylakoid membrane. Functionally, one of the components of the core complex of photosystem II (PSII). It binds chlorophyll and helps catalyze the primary light-induced photochemical processes of PSII. PSII is a light-driven water:plastoquinone oxidoreductase, using light energy to abstract electrons from H(2)O, generating O(2) and a proton gradient subsequently used for ATP formation. This chain is Photosystem II CP47 reaction center protein, found in Daucus carota (Wild carrot).